Consider the following 571-residue polypeptide: OTU domain-containing protein 5 (571 aa).

Disordered regions lie at residues 1–111 (MTIL…GPGG) and 146–175 (PGHS…GAGY). A compositionally biased stretch (pro residues) spans 11-30 (PPDADPANEPPPPGPMPPAP). The segment covering 32-47 (RGGGVGVGGGGTGVGG) has biased composition (gly residues). Positions 63-75 (ASPPPQGPLPGPP) are enriched in pro residues. Serine 64 is subject to Phosphoserine. A compositionally biased stretch (low complexity) spans 84 to 97 (AVPPGAVAGPRPQQ). Position 165 is a phosphoserine (serine 165). Phosphotyrosine is present on tyrosine 175. At serine 177 the chain carries Phosphoserine. Position 195 is a phosphothreonine (threonine 195). The region spanning 213-341 (FIIKQMKEDG…NIHYNSVVNP (129 aa)) is the OTU domain. Residues 218–224 (MKEDGAC) form a cys-loop region. Aspartate 221 is an active-site residue. Cysteine 224 functions as the Nucleophile in the catalytic mechanism. The interval 273–283 (KRKNNCHGNHI) is variable-loop. Serine 328 is modified (phosphoserine; by MTOR). Positions 329–334 (YHRNIH) are his-loop. Residue histidine 334 is part of the active site. Serine 337 and serine 375 each carry phosphoserine. The tract at residues 418–502 (ARQVRGPSQP…PGTSSQFSAG (85 aa)) is disordered. Low complexity-rich tracts occupy residues 430 to 443 (ASAT…AASS) and 450 to 462 (SRSP…ASSP). A Phosphoserine modification is found at serine 452. Threonine 507 is modified (phosphothreonine). Serine 508 bears the Phosphoserine; by MTOR mark.

Belongs to the peptidase C85 family. As to quaternary structure, interacts with TRAF3. Post-translationally, phosphorylation at Ser-177 is required for deubiquitinating activity. Phosphorylation at Ser-328, Ser-337 and Ser-508 by MTOR promotes its activity. In terms of tissue distribution, expressed in various tissues, including the liver and placenta, as well as in peripheral blood leukocytes.

It localises to the nucleus. The catalysed reaction is Thiol-dependent hydrolysis of ester, thioester, amide, peptide and isopeptide bonds formed by the C-terminal Gly of ubiquitin (a 76-residue protein attached to proteins as an intracellular targeting signal).. Inhibited by N-ethyl-maleimide (NEM). Deubiquitinating enzyme that functions as a negative regulator of the innate immune system. Has peptidase activity towards 'Lys-48'- and 'Lys-63'-linked polyubiquitin chains. Can also cleave 'Lys-11'-linked ubiquitin chains (in vitro). Acts via TRAF3 deubiquitination and subsequent suppression of type I interferon (IFN) production. Controls neuroectodermal differentiation through cleaving 'Lys-48'-linked ubiquitin chains to counteract degradation of select chromatin regulators such as ARID1A, HDAC2 and HCF1. Acts as a positive regulator of mTORC1 and mTORC2 signaling following phosphorylation by MTOR: acts by mediating deubiquitination of BTRC, leading to its stability. This is OTU domain-containing protein 5 from Homo sapiens (Human).